The primary structure comprises 235 residues: Phosphoribosylaminoimidazole-succinocarboxamide synthase (235 aa).

This sequence belongs to the SAICAR synthetase family.

The catalysed reaction is 5-amino-1-(5-phospho-D-ribosyl)imidazole-4-carboxylate + L-aspartate + ATP = (2S)-2-[5-amino-1-(5-phospho-beta-D-ribosyl)imidazole-4-carboxamido]succinate + ADP + phosphate + 2 H(+). It functions in the pathway purine metabolism; IMP biosynthesis via de novo pathway; 5-amino-1-(5-phospho-D-ribosyl)imidazole-4-carboxamide from 5-amino-1-(5-phospho-D-ribosyl)imidazole-4-carboxylate: step 1/2. The protein is Phosphoribosylaminoimidazole-succinocarboxamide synthase of Clostridium botulinum (strain Eklund 17B / Type B).